The primary structure comprises 340 residues: MAASEDELLLPRLPELFETSKKLLEDVEVATEPTGSRTIQDKVSKGLELLEKAAGMLSQLDLFSRNEDLEEIASTDLKYLMVPALQGALTMKQVNPSKRLDHLQRAREHFVHFLTQCHCYHVAEFQLPQTKTNSAENNTASSSMAYPNLVAMASQRQAKIERYKQKKEVEHRLSALKSAVESGQADDERVREYHLLHLRRWIAVSLEELESIDQEIKILKEKDSPREETACHSSLPEKPPMKPFILTRNKAQAKVFGTGYPSLATMTVSDWYEQHQKYGVLPDRGIAKPASADFQRAAQQQEDQEQKDEESEEKALHRMREWDDWKDTHPRGYGNRQNMG.

In terms of domain architecture, UIM spans 47–61 (LELLEKAAGMLSQLD). The segment at 99–203 (RLDHLQRARE…HLLHLRRWIA (105 aa)) is interaction with PPP2CA. 2 disordered regions span residues 223 to 242 (DSPR…PPMK) and 291 to 340 (SADF…QNMG). Residues 226 to 291 (REETACHSSL…PDRGIAKPAS (66 aa)) form an interaction with MID1 region. Lys242 bears the N6-acetyllysine mark. Positions 292 to 301 (ADFQRAAQQQ) are enriched in low complexity. Acidic residues predominate over residues 302–312 (EDQEQKDEESE). The segment covering 313 to 330 (EKALHRMREWDDWKDTHP) has biased composition (basic and acidic residues).

It belongs to the IGBP1/TAP42 family. In terms of assembly, interacts with PPP2CB, and with PP4 and PP6. Interacts with MID2. Interacts with ubiquitin. Interacts with partially folded PPP2CA, but not with the fully active protein. Interacts with MID1. Phosphorylated. Post-translationally, monoubiquitination by MID1 triggers calpain-mediated cleavage and switches IGBP1 activity from protective to destructive. Expressed in spleen, thymus, liver and brain. Ubiquitously expressed in B lineage cell lines.

It is found in the cytoplasm. Associated to surface IgM-receptor; may be involved in signal transduction. Involved in regulation of the catalytic activity of the phosphatases PP2A, PP4 and PP6 by protecting their partially folded catalytic subunits from degradative polyubiquitination until they associate with regulatory subunits. The chain is Immunoglobulin-binding protein 1 (Igbp1) from Mus musculus (Mouse).